The primary structure comprises 336 residues: Dihydroorotate dehydrogenase (quinone) (336 aa).

Residues 62 to 66 (AGLDK) and T86 each bind FMN. Residue K66 coordinates substrate. Residue 111-115 (NRMGF) coordinates substrate. Residues N139 and N172 each contribute to the FMN site. N172 is a substrate binding site. Residue S175 is the Nucleophile of the active site. N177 contacts substrate. K217 and T245 together coordinate FMN. 246–247 (NT) contributes to the substrate binding site. Residues G268, G297, and 318 to 319 (YS) each bind FMN.

The protein belongs to the dihydroorotate dehydrogenase family. Type 2 subfamily. In terms of assembly, monomer. FMN serves as cofactor.

Its subcellular location is the cell membrane. The catalysed reaction is (S)-dihydroorotate + a quinone = orotate + a quinol. It participates in pyrimidine metabolism; UMP biosynthesis via de novo pathway; orotate from (S)-dihydroorotate (quinone route): step 1/1. In terms of biological role, catalyzes the conversion of dihydroorotate to orotate with quinone as electron acceptor. This chain is Dihydroorotate dehydrogenase (quinone), found in Pectobacterium carotovorum subsp. carotovorum (strain PC1).